The primary structure comprises 172 residues: Translation initiation factor IF-3 (172 aa).

It belongs to the IF-3 family. As to quaternary structure, monomer.

The protein localises to the cytoplasm. Functionally, IF-3 binds to the 30S ribosomal subunit and shifts the equilibrium between 70S ribosomes and their 50S and 30S subunits in favor of the free subunits, thus enhancing the availability of 30S subunits on which protein synthesis initiation begins. The sequence is that of Translation initiation factor IF-3 from Campylobacter jejuni subsp. doylei (strain ATCC BAA-1458 / RM4099 / 269.97).